A 465-amino-acid polypeptide reads, in one-letter code: ATP synthase subunit beta (465 aa).

Residue 152–159 (GGAGVGKT) participates in ATP binding.

This sequence belongs to the ATPase alpha/beta chains family. In terms of assembly, F-type ATPases have 2 components, CF(1) - the catalytic core - and CF(0) - the membrane proton channel. CF(1) has five subunits: alpha(3), beta(3), gamma(1), delta(1), epsilon(1). CF(0) has three main subunits: a(1), b(2) and c(9-12). The alpha and beta chains form an alternating ring which encloses part of the gamma chain. CF(1) is attached to CF(0) by a central stalk formed by the gamma and epsilon chains, while a peripheral stalk is formed by the delta and b chains.

Its subcellular location is the cell inner membrane. It carries out the reaction ATP + H2O + 4 H(+)(in) = ADP + phosphate + 5 H(+)(out). In terms of biological role, produces ATP from ADP in the presence of a proton gradient across the membrane. The catalytic sites are hosted primarily by the beta subunits. This Campylobacter fetus subsp. fetus (strain 82-40) protein is ATP synthase subunit beta.